A 236-amino-acid polypeptide reads, in one-letter code: GLIPR1-like protein 1 (236 aa).

The first 27 residues, 1 to 27, serve as a signal peptide directing secretion; the sequence is MALKKKLNFLWTLVLYLIASRLPKAFG. An SCP domain is found at 46-178; sequence LNIHNELRRK…FSAGLFVCNY (133 aa). An N-linked (GlcNAc...) asparagine glycan is attached at Asn126.

The protein belongs to the CRISP family. Part of a oolemmal binding multimeric complex (IZUMO1 complex) composed at least of IZUMO1 and GLIPR1L1; the complex assemblage is influenced by the maturation status of the male germ cell. Interacts with IZUMO1. In terms of processing, N-glycosylated. N-glycosylation decreases during the transit in the caput. As to expression, expressed in testis (at protein level). Little or no expression in other tissues tested.

Its subcellular location is the cytoplasmic vesicle. It localises to the secretory vesicle. The protein localises to the acrosome. The protein resides in the cell membrane. It is found in the membrane raft. Its subcellular location is the secreted. In terms of biological role, required for optimal fertilization at the stage of sperm-oocyte fusion, plays a role in optimizing acrosome function, the translocation of IZUMO1 during the acrosome reaction and the fertilization process. Component of epididymosomes, one type of membranous microvesicules which mediate the transfer of lipids and proteins to spermatozoa plasma membrane during epididymal maturation. Also component of the CD9-positive microvesicules found in the cauda region. The protein is GLIPR1-like protein 1 of Mus musculus (Mouse).